The following is an 89-amino-acid chain: Small ribosomal subunit protein uS15 (89 aa).

Belongs to the universal ribosomal protein uS15 family. In terms of assembly, part of the 30S ribosomal subunit. Forms a bridge to the 50S subunit in the 70S ribosome, contacting the 23S rRNA.

Functionally, one of the primary rRNA binding proteins, it binds directly to 16S rRNA where it helps nucleate assembly of the platform of the 30S subunit by binding and bridging several RNA helices of the 16S rRNA. Forms an intersubunit bridge (bridge B4) with the 23S rRNA of the 50S subunit in the ribosome. The polypeptide is Small ribosomal subunit protein uS15 (Exiguobacterium sibiricum (strain DSM 17290 / CCUG 55495 / CIP 109462 / JCM 13490 / 255-15)).